A 141-amino-acid polypeptide reads, in one-letter code: ATP synthase epsilon chain (141 aa).

The protein belongs to the ATPase epsilon chain family. In terms of assembly, F-type ATPases have 2 components, CF(1) - the catalytic core - and CF(0) - the membrane proton channel. CF(1) has five subunits: alpha(3), beta(3), gamma(1), delta(1), epsilon(1). CF(0) has three main subunits: a, b and c.

It is found in the cell inner membrane. Functionally, produces ATP from ADP in the presence of a proton gradient across the membrane. The sequence is that of ATP synthase epsilon chain from Azoarcus sp. (strain BH72).